The primary structure comprises 280 residues: 3-methyl-2-oxobutanoate hydroxymethyltransferase (280 aa).

Mg(2+) contacts are provided by aspartate 49 and aspartate 88. Residues 49–50 (DS), aspartate 88, and lysine 118 contribute to the 3-methyl-2-oxobutanoate site. A Mg(2+)-binding site is contributed by glutamate 120. Glutamate 187 serves as the catalytic Proton acceptor.

Belongs to the PanB family. In terms of assembly, homodecamer; pentamer of dimers. Mg(2+) is required as a cofactor.

The protein localises to the cytoplasm. It catalyses the reaction 3-methyl-2-oxobutanoate + (6R)-5,10-methylene-5,6,7,8-tetrahydrofolate + H2O = 2-dehydropantoate + (6S)-5,6,7,8-tetrahydrofolate. It functions in the pathway cofactor biosynthesis; (R)-pantothenate biosynthesis; (R)-pantoate from 3-methyl-2-oxobutanoate: step 1/2. In terms of biological role, catalyzes the reversible reaction in which hydroxymethyl group from 5,10-methylenetetrahydrofolate is transferred onto alpha-ketoisovalerate to form ketopantoate. In Xanthobacter autotrophicus (strain ATCC BAA-1158 / Py2), this protein is 3-methyl-2-oxobutanoate hydroxymethyltransferase.